The sequence spans 497 residues: Signal recognition particle receptor FtsY (497 aa).

Disordered stretches follow at residues 1–63 (MAKE…TEAE) and 79–130 (AESE…EWQA). Positions 87-96 (EAEVVAQPEP) are enriched in low complexity. GTP contacts are provided by residues 300–307 (GVNGVGKT), 382–386 (DTAGR), and 446–449 (TKLD).

Belongs to the GTP-binding SRP family. FtsY subfamily. As to quaternary structure, part of the signal recognition particle protein translocation system, which is composed of SRP and FtsY. SRP is a ribonucleoprotein composed of Ffh and a 4.5S RNA molecule. Binds to SecY. Post-translationally, proteolytically cleaved. The cleavage may regulate function and subcellular location of FtsY. Full-length FtsY is found primarily associated with the membrane, while cleaved protein is predominantly present in the cytoplasm.

It localises to the cell inner membrane. The protein localises to the cytoplasm. The enzyme catalyses GTP + H2O = GDP + phosphate + H(+). Its activity is regulated as follows. Conformation of the Ffh-FtsY complex and regulation of its GTPase activity are modulated by the 4.5S RNA. Formation of the FfH-FtsY complex leads to a mutual stimulation of both GTPases. Its function is as follows. Involved in targeting and insertion of nascent membrane proteins into the cytoplasmic membrane. Acts as a receptor for the complex formed by the signal recognition particle (SRP) and the ribosome-nascent chain (RNC). Interaction with SRP-RNC leads to the transfer of the RNC complex to the Sec translocase for insertion into the membrane, the hydrolysis of GTP by both Ffh and FtsY, and the dissociation of the SRP-FtsY complex into the individual components. This chain is Signal recognition particle receptor FtsY, found in Escherichia coli (strain K12).